The chain runs to 202 residues: Superoxide dismutase [Mn] (202 aa).

Mn(2+) is bound by residues His27, His82, Asp164, and His168.

This sequence belongs to the iron/manganese superoxide dismutase family. Homodimer. It depends on Mn(2+) as a cofactor.

The enzyme catalyses 2 superoxide + 2 H(+) = H2O2 + O2. In terms of biological role, destroys superoxide anion radicals which are normally produced within the cells and which are toxic to biological systems. The polypeptide is Superoxide dismutase [Mn] (sodA) (Listeria monocytogenes serovar 1/2a (strain ATCC BAA-679 / EGD-e)).